We begin with the raw amino-acid sequence, 398 residues long: Nuclear egress protein 2 (398 aa).

Topologically, residues 1-359 (MEMNKVLHQD…GPSRPQSGPW (359 aa)) are perinuclear space. 2 disordered regions span residues 202–246 (ALTR…PPPP) and 306–334 (LEEHVSRRRGVSTHHRHPPSPPCTPSLER). Positions 215–224 (ASPPPPPPRH) are enriched in pro residues. Phosphoserine is present on S216. Positions 225–240 (PSCSPTMVAAGGAAAG) are enriched in low complexity. Over residues 311-323 (SRRRGVSTHHRHP) the composition is skewed to basic residues. A helical membrane pass occupies residues 360–382 (LPARFATLGPLVLALLLVLALLW). Over 383–398 (RGHGQSSSPTRSAHRD) the chain is Nuclear.

The protein belongs to the herpesviridae NEC2 protein family. As to quaternary structure, forms a heterohexameric complex with NEC1. Interacts with host UBA7 and RNF170; this interaction promotes UBA7 proteasomal degradation. Post-translationally, phosphorylated. Phosphorylation by viral kinase UL97 at Ser-216 plays an important role for correct viral nuclear egress complex (NEC) localization.

Its subcellular location is the host nucleus inner membrane. In terms of biological role, plays an essential role in virion nuclear egress, the first step of virion release from infected cell. Within the host nucleus, NEC1 interacts with the newly formed capsid through the vertexes and directs it to the inner nuclear membrane by associating with NEC2. Induces the budding of the capsid at the inner nuclear membrane as well as its envelopment into the perinuclear space. There, the NEC1/NEC2 complex promotes the fusion of the enveloped capsid with the outer nuclear membrane and the subsequent release of the viral capsid into the cytoplasm where it will reach the secondary budding sites in the host Golgi or trans-Golgi network. Inhibits host ISGylation and subsequent innate antiviral response by targeting host UBA7 for proteasomal degradation. This chain is Nuclear egress protein 2, found in Homo sapiens (Human).